The sequence spans 356 residues: Chorismate synthase (356 aa).

Residues Arg-44 and Arg-49 each coordinate NADP(+). Residues 121-123, Gly-278, 293-297, and Arg-320 each bind FMN; these read HFS and KPTPS.

This sequence belongs to the chorismate synthase family. FMNH2 is required as a cofactor.

The enzyme catalyses 5-O-(1-carboxyvinyl)-3-phosphoshikimate = chorismate + phosphate. It participates in metabolic intermediate biosynthesis; chorismate biosynthesis; chorismate from D-erythrose 4-phosphate and phosphoenolpyruvate: step 7/7. Catalyzes the anti-1,4-elimination of the C-3 phosphate and the C-6 proR hydrogen from 5-enolpyruvylshikimate-3-phosphate (EPSP) to yield chorismate, which is the branch point compound that serves as the starting substrate for the three terminal pathways of aromatic amino acid biosynthesis. This reaction introduces a second double bond into the aromatic ring system. In Thermococcus gammatolerans (strain DSM 15229 / JCM 11827 / EJ3), this protein is Chorismate synthase.